The sequence spans 695 residues: MNRVINFLNMVALSAMRRSELVGAFFVIAIVFMMITPLPTGLIDVLIAVNICISCLLIMLAMHLPRPLAFSTFPAVLLLTTMFRLALSVSTTRLILLNQDAGHIVEAFGQFVVGGNLAVGLVIFLILTVVNFLVITKGSERVAEVGARFTLDAMPGKQMSIDSDLRANLITVHEARKRRAELNKESQLFGAMDGAMKFVNGDAIASLIIVAINMIGGISIGVLQHNMAAGDALQLYTVLTIGDGLIAQIPALLISVTSGMIITRVPNTEAGVEANIGREIAEQITSQPKAWIIASVAMLGFAALPGMPTGVFITIAIICGAGGLLQLQRAKPKADEQRTAAVAPEMNGKEDLRTFSPSRQFVLQFHPGQDSAQIEALVSEIRKRRNRLVVQYGLTLPSFIIEHVDDIAPDEFRFTVYDVPMLKATFTQSHVAVEARQLEGENLPAAIPGNTDRQEDQWVWLPAEQSGELNPVSSTTLIIERMERALQSCAPQFIGLQETKAILSWLESEQPELAQEMQRVLTLTRFSAVLQRLASECVPLRAIRVIAETLIEHCQHERDTNVLTDYVRIALKSQIYHQYCGAEGLQVWLVTPESEGLLRDGLRQTQTETFFALSNETSQMLVQQLHIAFPVRAPEQAVLLVAQDLRSPLRTLLREEFYHVPVLSFAEISNAAKVKVMGRFDLEDDLEPLDNEHAA.

Helical transmembrane passes span 21–38 (LVGAFFVIAIVFMMITPL), 45–61 (VLIAVNICISCLLIMLA), 68–92 (LAFSTFPAVLLLTTMFRLALSVSTT), 111–135 (FVVGGNLAVGLVIFLILTVVNFLVI), 203–223 (AIASLIIVAINMIGGISIGVL), 244–262 (GLIAQIPALLISVTSGMII), and 311–327 (VFITIAIICGAGGLLQL).

This sequence belongs to the FHIPEP (flagella/HR/invasion proteins export pore) family.

The protein localises to the cell inner membrane. Its function is as follows. Involved in the secretion of harpin-pss; a proteinaceous elicitor of the hypersensitivity response in plants. This Pseudomonas syringae pv. syringae protein is Hypersensitivity response secretion protein HrpI (hrpI).